A 334-amino-acid chain; its full sequence is Glyceraldehyde-3-phosphate dehydrogenase (334 aa).

Residues 12-13 (TI) and Gly-111 contribute to the NAD(+) site. Position 140–142 (140–142 (SCN)) interacts with D-glyceraldehyde 3-phosphate. The active-site Nucleophile is the Cys-141. An NAD(+)-binding site is contributed by Arg-167. D-glyceraldehyde 3-phosphate is bound at residue 192–193 (HG). Residue Gln-298 coordinates NAD(+).

The protein belongs to the glyceraldehyde-3-phosphate dehydrogenase family. In terms of assembly, homotetramer.

The protein localises to the cytoplasm. It catalyses the reaction D-glyceraldehyde 3-phosphate + phosphate + NADP(+) = (2R)-3-phospho-glyceroyl phosphate + NADPH + H(+). The catalysed reaction is D-glyceraldehyde 3-phosphate + phosphate + NAD(+) = (2R)-3-phospho-glyceroyl phosphate + NADH + H(+). The protein operates within carbohydrate degradation; glycolysis; pyruvate from D-glyceraldehyde 3-phosphate: step 1/5. This chain is Glyceraldehyde-3-phosphate dehydrogenase, found in Thermococcus sibiricus (strain DSM 12597 / MM 739).